Reading from the N-terminus, the 329-residue chain is Glycerol-3-phosphate dehydrogenase [NAD(P)+] (329 aa).

The NADPH site is built by serine 13, tryptophan 14, histidine 34, and lysine 105. Residues lysine 105, glycine 134, and serine 136 each coordinate sn-glycerol 3-phosphate. Residue alanine 138 coordinates NADPH. The sn-glycerol 3-phosphate site is built by lysine 189, aspartate 242, serine 252, arginine 253, and asparagine 254. Residue lysine 189 is the Proton acceptor of the active site. Arginine 253 contacts NADPH. NADPH contacts are provided by valine 277 and glutamate 279.

This sequence belongs to the NAD-dependent glycerol-3-phosphate dehydrogenase family.

The protein localises to the cytoplasm. The enzyme catalyses sn-glycerol 3-phosphate + NAD(+) = dihydroxyacetone phosphate + NADH + H(+). The catalysed reaction is sn-glycerol 3-phosphate + NADP(+) = dihydroxyacetone phosphate + NADPH + H(+). It functions in the pathway membrane lipid metabolism; glycerophospholipid metabolism. In terms of biological role, catalyzes the reduction of the glycolytic intermediate dihydroxyacetone phosphate (DHAP) to sn-glycerol 3-phosphate (G3P), the key precursor for phospholipid synthesis. The protein is Glycerol-3-phosphate dehydrogenase [NAD(P)+] of Legionella pneumophila (strain Lens).